A 78-amino-acid polypeptide reads, in one-letter code: uncharacterized protein (78 aa).

This is an uncharacterized protein from Escherichia coli O6:H1 (strain CFT073 / ATCC 700928 / UPEC).